Consider the following 101-residue polypeptide: Small ribosomal subunit protein uS14 (101 aa).

This sequence belongs to the universal ribosomal protein uS14 family. As to quaternary structure, part of the 30S ribosomal subunit. Contacts proteins S3 and S10.

In terms of biological role, binds 16S rRNA, required for the assembly of 30S particles and may also be responsible for determining the conformation of the 16S rRNA at the A site. This chain is Small ribosomal subunit protein uS14, found in Francisella tularensis subsp. tularensis (strain FSC 198).